Here is a 579-residue protein sequence, read N- to C-terminus: Type IV pilus assembly ATPase PilB (579 aa).

An ATP-binding site is contributed by 340–345 (GSGKTV). Residues Cys470, Cys473, Cys507, and Cys510 each contribute to the Zn(2+) site.

The protein belongs to the GSP E family. Interacts with CpiA.

Its subcellular location is the cytoplasm. Its activity is regulated as follows. Inhibited by the inhibitory protein CpiA. Its function is as follows. ATPase component of the type IV pilus (T4P). Acts as a molecular motor to provide the energy that is required for biogenesis of the pilus and the extrusion of substrates generated in the cytoplasm. PilB is required for optimal T4P extension and, consequently, efficient natural transformation. May promote processive T4P extension. This Acinetobacter baylyi (strain ATCC 33305 / BD413 / ADP1) protein is Type IV pilus assembly ATPase PilB.